Here is a 458-residue protein sequence, read N- to C-terminus: Mitochondrial-processing peptidase subunit beta (458 aa).

Residues 1-41 (MYRRLASGLYQTSQRRIAQVQPKSVFVPETIVTTLPNGFRV) constitute a mitochondrion transit peptide. A Zn(2+)-binding site is contributed by His-73. Glu-76 acts as the Proton acceptor in catalysis. Zn(2+) contacts are provided by His-77 and Glu-153.

The protein belongs to the peptidase M16 family. Heterodimer of mppa-1 (alpha) and mppb-1 (beta) subunits, forming the mitochondrial processing protease (MPP) in which mppa-1 is involved in substrate recognition and binding and mppb-1 is the catalytic subunit. It depends on Zn(2+) as a cofactor.

It localises to the mitochondrion matrix. The catalysed reaction is Release of N-terminal transit peptides from precursor proteins imported into the mitochondrion, typically with Arg in position P2.. With respect to regulation, binding to mppa-1 is required for catalytic activity. Inhibited by metal chelator ethylenediaminetetraacetic acid (EDTA). Functionally, catalytic subunit of the essential mitochondrial processing protease (MPP), which cleaves the mitochondrial sequence off newly imported precursors proteins. Preferentially, cleaves after an arginine at position P2. This chain is Mitochondrial-processing peptidase subunit beta, found in Caenorhabditis elegans.